The sequence spans 454 residues: Allantoinase (454 aa).

His58, His60, Lys149, His189, His245, and Asp318 together coordinate Zn(2+). N6-carboxylysine is present on Lys149.

This sequence belongs to the metallo-dependent hydrolases superfamily. Allantoinase family. In terms of assembly, homotetramer. Zn(2+) serves as cofactor. In terms of processing, carboxylation allows a single lysine to coordinate two zinc ions.

It catalyses the reaction (S)-allantoin + H2O = allantoate + H(+). Its pathway is nitrogen metabolism; (S)-allantoin degradation; allantoate from (S)-allantoin: step 1/1. Catalyzes the conversion of allantoin (5-ureidohydantoin) to allantoic acid by hydrolytic cleavage of the five-member hydantoin ring. The chain is Allantoinase from Enterococcus faecalis (strain ATCC 700802 / V583).